The chain runs to 113 residues: uncharacterized protein (113 aa).

2 consecutive transmembrane segments (helical) span residues 25–45 (FGFC…CFII) and 49–69 (FEVE…LSVW).

The protein resides in the host membrane. This is an uncharacterized protein from Spiroplasma citri (SpV1).